The chain runs to 152 residues: Nucleoside diphosphate kinase B (152 aa).

The interaction with AKAP13 stretch occupies residues 1–66; it reads MAHQERTFIA…DRPFYPGLVK (66 aa). ATP contacts are provided by K12, F60, R88, T94, R105, and N115. H118 functions as the Pros-phosphohistidine intermediate in the catalytic mechanism.

Belongs to the NDK family. As to quaternary structure, hexamer of two different chains: An and B (A6, A5B, A4B2, A3B3, A2B4, AB5, B6). Interacts with CAPN8. Interacts with AKAP13. Interacts with ITGB1BP1 (via C-terminal domain region). Interacts with BCL2L10. Mg(2+) is required as a cofactor. In terms of tissue distribution, ubiquitous.

The protein resides in the cytoplasm. It is found in the cell projection. It localises to the lamellipodium. The protein localises to the ruffle. Its subcellular location is the nucleus. The catalysed reaction is a 2'-deoxyribonucleoside 5'-diphosphate + ATP = a 2'-deoxyribonucleoside 5'-triphosphate + ADP. It carries out the reaction a ribonucleoside 5'-diphosphate + ATP = a ribonucleoside 5'-triphosphate + ADP. It catalyses the reaction ATP + protein L-histidine = ADP + protein N-phospho-L-histidine.. Major role in the synthesis of nucleoside triphosphates other than ATP. The ATP gamma phosphate is transferred to the NDP beta phosphate via a ping-pong mechanism, using a phosphorylated active-site intermediate. Negatively regulates Rho activity by interacting with AKAP13/LBC. Acts as a transcriptional activator of the MYC gene; binds DNA non-specifically. Binds to both single-stranded guanine- and cytosine-rich strands within the nuclease hypersensitive element (NHE) III(1) region of the MYC gene promoter. Does not bind to duplex NHE III(1). Has G-quadruplex (G4) DNA-binding activity, which is independent of its nucleotide-binding and kinase activity. Binds both folded and unfolded G4 with similar low nanomolar affinities. Stabilizes folded G4s regardless of whether they are prefolded or not. Exhibits histidine protein kinase activity. This Canis lupus familiaris (Dog) protein is Nucleoside diphosphate kinase B (NME2).